The chain runs to 210 residues: MENVTVVDHPLLKRDLTLLRREETPHGQFRKTVSDAAAILAYEAMRDIELEETSIETPLEQTTGYEIAEEVMVVPIMRAGLGMVDGFVRYVPEARVGHLGMQRDEETYRPVDYYSNIPSTIGHAHVFVVDPMLATGGSASFAIDHLKEEGGQDFTFACLVAAPEGVQKLREEHPDVPVVTAVLDRELDDNAFIRPGLGDAGDRIFGTRES.

5-phospho-alpha-D-ribose 1-diphosphate-binding positions include arginine 78, arginine 103, and 130-138; that span reads DPMLATGGS. Residues isoleucine 193 and 198 to 200 contribute to the uracil site; that span reads GDA. Residue aspartate 199 coordinates 5-phospho-alpha-D-ribose 1-diphosphate.

Belongs to the UPRTase family. Requires Mg(2+) as cofactor.

The enzyme catalyses UMP + diphosphate = 5-phospho-alpha-D-ribose 1-diphosphate + uracil. It participates in pyrimidine metabolism; UMP biosynthesis via salvage pathway; UMP from uracil: step 1/1. Allosterically activated by GTP. Its function is as follows. Catalyzes the conversion of uracil and 5-phospho-alpha-D-ribose 1-diphosphate (PRPP) to UMP and diphosphate. The sequence is that of Uracil phosphoribosyltransferase from Salinibacter ruber (strain DSM 13855 / M31).